A 70-amino-acid polypeptide reads, in one-letter code: MMFRLTSVGSFLLVIVFLNLVVLTNACDLEGMFCMYDFECCLSECCMGICAFGCTKRAQRQKLLRSFGQR.

A signal peptide spans 1-26 (MMFRLTSVGSFLLVIVFLNLVVLTNA). 4 cysteine pairs are disulfide-bonded: cysteine 27-cysteine 41, cysteine 34-cysteine 46, cysteine 40-cysteine 50, and cysteine 45-cysteine 54. The propeptide occupies 58-70 (AQRQKLLRSFGQR).

It belongs to the conotoxin I2 superfamily. As to expression, expressed by the venom duct.

The protein localises to the secreted. This is Conotoxin Lt11.6 from Conus litteratus (Lettered cone).